Here is a 335-residue protein sequence, read N- to C-terminus: CTD kinase subunit beta (335 aa).

Cyclin N-terminal domains follow at residues 26-151 and 158-241; these read ILST…CFDF and NYMV…LYMH. Residues 269–293 form a disordered region; sequence KNSGRPQKPPQIDPHSSSLADEYRE.

Belongs to the cyclin family. In terms of assembly, CTDK-I consists of three subunits, ctk1/lsk1, ctk2/lsc1 and ctk3 (also called alpha, beta and gamma). Interacts with ctk1/lsk1. This interaction is dependent on ctk1/lsk1 kinase activity.

The protein resides in the cytoplasm. It is found in the nucleus. Cyclin subunit of the CTDK-I complex, which hyperphosphorylates the C-terminal heptapeptide repeat domain (CTD) of the largest RNA polymerase II subunit. As part of the CTDK-I complex, involved in RNA polymerase II transcriptional elongation and pre-mRNA 3'-end processing. Together with ctk3, required for ctk1/lsk1 CTD kinase activation. Together with ctk1/lsk1, required for the regulation of cytokinesis by phosphorylating 'Ser-2' residues found in the heptad repeats of the CTD. This is CTD kinase subunit beta (lsc1) from Schizosaccharomyces pombe (strain 972 / ATCC 24843) (Fission yeast).